A 447-amino-acid chain; its full sequence is Serine/threonine-protein phosphatase 2A 55 kDa regulatory subunit B gamma isoform (447 aa).

WD repeat units lie at residues 22–61 (TEAD…KNAP), 87–128 (EIEE…KRPE), 171–209 (GHTY…RSFN), 220–260 (DLTE…LCDK), 279–317 (EIIS…RPIE), 334–375 (ESDC…DVTL), and 410–446 (DFTK…NSDM).

Belongs to the phosphatase 2A regulatory subunit B family. As to quaternary structure, PP2A consists of a common heterodimeric core enzyme, composed of a 36 kDa catalytic subunit (subunit C) and a 65 kDa constant regulatory subunit (PR65 or subunit A), that associates with a variety of regulatory subunits. Proteins that associate with the core dimer include three families of regulatory subunits B (the R2/B/PR55/B55, R3/B''/PR72/PR130/PR59 and R5/B'/B56 families), the 48 kDa variable regulatory subunit, viral proteins, and cell signaling molecules. Interacts with IER5.

The B regulatory subunit might modulate substrate selectivity and catalytic activity, and might also direct the localization of the catalytic enzyme to a particular subcellular compartment. This chain is Serine/threonine-protein phosphatase 2A 55 kDa regulatory subunit B gamma isoform (Ppp2r2c), found in Mus musculus (Mouse).